The primary structure comprises 95 residues: MNLRPLQDRILVKRIEEETKTAGGIFIPDTAKEKPQRGEIVAVGNGKKTEDGKVIPVDLKVGDKVLFGKYAGTDIKIEGQEFLIMREDDILGVIE.

The protein belongs to the GroES chaperonin family. As to quaternary structure, heptamer of 7 subunits arranged in a ring. Interacts with the chaperonin GroEL.

The protein resides in the cytoplasm. Functionally, together with the chaperonin GroEL, plays an essential role in assisting protein folding. The GroEL-GroES system forms a nano-cage that allows encapsulation of the non-native substrate proteins and provides a physical environment optimized to promote and accelerate protein folding. GroES binds to the apical surface of the GroEL ring, thereby capping the opening of the GroEL channel. This Geobacter sulfurreducens (strain ATCC 51573 / DSM 12127 / PCA) protein is Co-chaperonin GroES.